A 147-amino-acid chain; its full sequence is MVHLTPEEKSAVTALWGKVNVDEVGGEALGRLLVVYPWTQRFFESFGDLSTPDAVMGNPKVKAHGKKVLGAFSDGLAHLDNLKGTFATLSELHCDKLHVDPENFKLLGNVLVCVLAHHFGKEFTPPVQAAYQKVVAGVANALAHKYH.

Position 2 is an N-acetylvaline (valine 2). A Globin domain is found at 3 to 147 (HLTPEEKSAV…VANALAHKYH (145 aa)). The residue at position 13 (threonine 13) is a Phosphothreonine. Serine 45 carries the post-translational modification Phosphoserine. Position 60 is an N6-acetyllysine (lysine 60). Histidine 64 is a binding site for heme b. At lysine 83 the chain carries N6-acetyllysine. A heme b-binding site is contributed by histidine 93. Cysteine 94 carries the post-translational modification S-nitrosocysteine. Lysine 145 carries the post-translational modification N6-acetyllysine.

This sequence belongs to the globin family. As to quaternary structure, heterotetramer of two alpha chains and two beta chains. Red blood cells.

In terms of biological role, involved in oxygen transport from the lung to the various peripheral tissues. This is Hemoglobin subunit beta (HBB) from Gorilla gorilla gorilla (Western lowland gorilla).